Consider the following 137-residue polypeptide: Small ribosomal subunit protein uS12 (137 aa).

A disordered region spans residues 1-43; it reads MPTINQLVRKGRVSKTKKSDSPALNKGYNSFKKRMTDQNAPQK.

The protein belongs to the universal ribosomal protein uS12 family. As to quaternary structure, part of the 30S ribosomal subunit. Contacts proteins S8 and S17. May interact with IF1 in the 30S initiation complex.

Its function is as follows. With S4 and S5 plays an important role in translational accuracy. In terms of biological role, interacts with and stabilizes bases of the 16S rRNA that are involved in tRNA selection in the A site and with the mRNA backbone. Located at the interface of the 30S and 50S subunits, it traverses the body of the 30S subunit contacting proteins on the other side and probably holding the rRNA structure together. The combined cluster of proteins S8, S12 and S17 appears to hold together the shoulder and platform of the 30S subunit. This chain is Small ribosomal subunit protein uS12, found in Oceanobacillus iheyensis (strain DSM 14371 / CIP 107618 / JCM 11309 / KCTC 3954 / HTE831).